The chain runs to 159 residues: Ribosomal RNA large subunit methyltransferase H (159 aa).

S-adenosyl-L-methionine contacts are provided by residues G108 and 127–132 (FSKMTF).

Belongs to the RNA methyltransferase RlmH family. In terms of assembly, homodimer.

It localises to the cytoplasm. It catalyses the reaction pseudouridine(1915) in 23S rRNA + S-adenosyl-L-methionine = N(3)-methylpseudouridine(1915) in 23S rRNA + S-adenosyl-L-homocysteine + H(+). In terms of biological role, specifically methylates the pseudouridine at position 1915 (m3Psi1915) in 23S rRNA. This Clostridium acetobutylicum (strain ATCC 824 / DSM 792 / JCM 1419 / IAM 19013 / LMG 5710 / NBRC 13948 / NRRL B-527 / VKM B-1787 / 2291 / W) protein is Ribosomal RNA large subunit methyltransferase H.